Consider the following 254-residue polypeptide: Acetylglutamate kinase (254 aa).

Substrate-binding positions include 40–41 (GG), Arg-62, and Asn-154. ATP contacts are provided by residues 177-182 (DVSGIL) and 205-207 (IIT).

This sequence belongs to the acetylglutamate kinase family. ArgB subfamily. As to quaternary structure, homodimer.

The protein resides in the cytoplasm. The enzyme catalyses N-acetyl-L-glutamate + ATP = N-acetyl-L-glutamyl 5-phosphate + ADP. The protein operates within amino-acid biosynthesis; L-arginine biosynthesis; N(2)-acetyl-L-ornithine from L-glutamate: step 2/4. Catalyzes the ATP-dependent phosphorylation of N-acetyl-L-glutamate. The chain is Acetylglutamate kinase from Yersinia enterocolitica serotype O:8 / biotype 1B (strain NCTC 13174 / 8081).